The following is a 141-amino-acid chain: Hemoglobin subunit alpha-D (141 aa).

Positions 1–141 constitute a Globin domain; that stretch reads MLTAEDKKLI…VAAVLAEKYR (141 aa). Heme b is bound by residues H58 and H87.

Belongs to the globin family. As to quaternary structure, heterotetramer of two alpha-D chains and two beta chains. As to expression, red blood cells.

Its function is as follows. Involved in oxygen transport from the lung to the various peripheral tissues. The chain is Hemoglobin subunit alpha-D (HBAD) from Cairina moschata (Muscovy duck).